A 427-amino-acid chain; its full sequence is Enolase (427 aa).

Gln163 contributes to the (2R)-2-phosphoglycerate binding site. Glu205 functions as the Proton donor in the catalytic mechanism. Mg(2+)-binding residues include Asp242, Glu285, and Asp312. Positions 337, 366, 367, and 388 each coordinate (2R)-2-phosphoglycerate. The Proton acceptor role is filled by Lys337.

It belongs to the enolase family. Requires Mg(2+) as cofactor.

It is found in the cytoplasm. The protein resides in the secreted. The protein localises to the cell surface. It catalyses the reaction (2R)-2-phosphoglycerate = phosphoenolpyruvate + H2O. The protein operates within carbohydrate degradation; glycolysis; pyruvate from D-glyceraldehyde 3-phosphate: step 4/5. Its function is as follows. Catalyzes the reversible conversion of 2-phosphoglycerate (2-PG) into phosphoenolpyruvate (PEP). It is essential for the degradation of carbohydrates via glycolysis. The chain is Enolase from Janthinobacterium sp. (strain Marseille) (Minibacterium massiliensis).